We begin with the raw amino-acid sequence, 308 residues long: PHO85 cyclin-2 (308 aa).

The region spanning 18 to 146 (EMVQYLASTT…LLEYFDWDVT (129 aa)) is the Cyclin N-terminal domain. The segment at 248 to 270 (SPRTYNIDSKHDNKENRPIPTIK) is disordered. The span at 255 to 264 (DSKHDNKENR) shows a compositional bias: basic and acidic residues.

Belongs to the cyclin family. PCL1,2 subfamily. In terms of assembly, forms a cyclin-CDK complex with PHO85. Interacts with RVS167.

Its subcellular location is the cytoplasm. It is found in the nucleus. In terms of biological role, G1/S-specific cyclin partner of the cyclin-dependent kinase (CDK) PHO85. Essential for the control of the cell cycle at the G1/S (start) transition. Together with cyclin PCL1, positively controls degradation of sphingoid long chain base kinase LCB4. The PCL2-PHO85 cyclin-CDK holoenzyme phosphorylates LCB4, which is required for its ubiquitination and degradation. PCL2-PHO85 also phosphorylates RVS167, linking cyclin-CDK activity with organization of the actin cytoskeleton. The polypeptide is PHO85 cyclin-2 (PCL2) (Saccharomyces cerevisiae (strain ATCC 204508 / S288c) (Baker's yeast)).